Here is a 458-residue protein sequence, read N- to C-terminus: Monomethylamine methyltransferase MtmB3 (458 aa).

A non-standard amino acid (pyrrolysine) is located at residue O202.

This sequence belongs to the monomethylamine methyltransferase family.

It catalyses the reaction Co(I)-[methylamine-specific corrinoid protein] + methylamine + H(+) = methyl-Co(III)-[methylamine-specific corrinoid protein] + NH4(+). The protein operates within one-carbon metabolism; methanogenesis from methylamine. Its function is as follows. Catalyzes the transfer of the methyl group from monomethylamine to the corrinoid cofactor of MtmC. This is Monomethylamine methyltransferase MtmB3 (mtmB3) from Methanosarcina barkeri (strain Fusaro / DSM 804).